We begin with the raw amino-acid sequence, 270 residues long: Phosphonates import ATP-binding protein PhnC (270 aa).

One can recognise an ABC transporter domain in the interval 2–245 (LVIEGLTCRF…IARELYDLEA (244 aa)). ATP is bound at residue 34–41 (GRSGAGKS).

Belongs to the ABC transporter superfamily. Phosphonates importer (TC 3.A.1.9.1) family. In terms of assembly, the complex is composed of two ATP-binding proteins (PhnC), two transmembrane proteins (PhnE) and a solute-binding protein (PhnD).

It localises to the cell inner membrane. It carries out the reaction phosphonate(out) + ATP + H2O = phosphonate(in) + ADP + phosphate + H(+). In terms of biological role, part of the ABC transporter complex PhnCDE involved in phosphonates import. Responsible for energy coupling to the transport system. The sequence is that of Phosphonates import ATP-binding protein PhnC from Rhodopseudomonas palustris (strain BisB5).